Consider the following 484-residue polypeptide: F-box/LRR-repeat protein At3g59210 (484 aa).

An F-box domain is found at 6–54 (KDIINCLPDNLLCQILSNLSTKEAALTSLLSKRWRYLFALVPNLDFDVL). 5 LRR repeats span residues 144–170 (KIGP…NLDS), 172–197 (VFEE…SLLN), 205–234 (SCSV…SFDT), 303–334 (TLYL…TIES), and 335–360 (HPEL…VFQG).

The protein is F-box/LRR-repeat protein At3g59210 of Arabidopsis thaliana (Mouse-ear cress).